The sequence spans 164 residues: Lipoprotein signal peptidase (164 aa).

3 helical membrane-spanning segments follow: residues W12 to Q32, W70 to S90, and A102 to V122. Residues D123 and D141 contribute to the active site. A helical membrane pass occupies residues F137–L157.

The protein belongs to the peptidase A8 family.

It is found in the cell inner membrane. It carries out the reaction Release of signal peptides from bacterial membrane prolipoproteins. Hydrolyzes -Xaa-Yaa-Zaa-|-(S,diacylglyceryl)Cys-, in which Xaa is hydrophobic (preferably Leu), and Yaa (Ala or Ser) and Zaa (Gly or Ala) have small, neutral side chains.. The protein operates within protein modification; lipoprotein biosynthesis (signal peptide cleavage). Functionally, this protein specifically catalyzes the removal of signal peptides from prolipoproteins. The polypeptide is Lipoprotein signal peptidase (Escherichia coli O157:H7).